Here is a 163-residue protein sequence, read N- to C-terminus: 6,7-dimethyl-8-ribityllumazine synthase (163 aa).

Residues Phe-27, 58–60, and 87–89 contribute to the 5-amino-6-(D-ribitylamino)uracil site; these read ALE and CVI. 92–93 provides a ligand contact to (2S)-2-hydroxy-3-oxobutyl phosphate; that stretch reads DT. Catalysis depends on His-95, which acts as the Proton donor. Residue Asn-120 coordinates 5-amino-6-(D-ribitylamino)uracil. A (2S)-2-hydroxy-3-oxobutyl phosphate-binding site is contributed by Arg-134.

The protein belongs to the DMRL synthase family.

It carries out the reaction (2S)-2-hydroxy-3-oxobutyl phosphate + 5-amino-6-(D-ribitylamino)uracil = 6,7-dimethyl-8-(1-D-ribityl)lumazine + phosphate + 2 H2O + H(+). Its pathway is cofactor biosynthesis; riboflavin biosynthesis; riboflavin from 2-hydroxy-3-oxobutyl phosphate and 5-amino-6-(D-ribitylamino)uracil: step 1/2. In terms of biological role, catalyzes the formation of 6,7-dimethyl-8-ribityllumazine by condensation of 5-amino-6-(D-ribitylamino)uracil with 3,4-dihydroxy-2-butanone 4-phosphate. This is the penultimate step in the biosynthesis of riboflavin. The polypeptide is 6,7-dimethyl-8-ribityllumazine synthase (Afipia carboxidovorans (strain ATCC 49405 / DSM 1227 / KCTC 32145 / OM5) (Oligotropha carboxidovorans)).